A 655-amino-acid polypeptide reads, in one-letter code: uncharacterized protein (655 aa).

Residues 245 to 469 enclose the PE-PPE domain; that stretch reads PGVIAQALFT…NLKVIVNLGY (225 aa).

The protein belongs to the mycobacterial PPE family.

This is an uncharacterized protein from Mycobacterium tuberculosis (strain ATCC 25618 / H37Rv).